Reading from the N-terminus, the 908-residue chain is Zinc finger CCCH domain-containing protein 41 (908 aa).

Over residues 1–13 the composition is skewed to polar residues; it reads MELSVSSPKQSVL. A disordered region spans residues 1-124; sequence MELSVSSPKQ…GRGNYGSWAQ (124 aa). The segment covering 20–34 has biased composition (acidic residues); the sequence is SDPEEEHEISEEEDD. Polar residues-rich tracts occupy residues 48 to 59 and 90 to 105; these read SQSLEQDSSDQA and GQRV…SNPM. Residues 200–228 form a C3H1-type zinc finger; the sequence is GIPRQRCRDFEERGFCLRGDMCPMEHGMN. The interval 333-375 is disordered; it reads NVAPLDDSNQDAAENGCGIRDSRSTSQSVWGRMKGSNSQANSK. Residues 356-373 are compositionally biased toward polar residues; sequence STSQSVWGRMKGSNSQAN. Residues 438–510 enclose the RRM domain; that stretch reads RTLFVNYVPH…RFIKLWWANR (73 aa). Disordered regions lie at residues 558–590, 629–695, and 807–908; these read PTFQ…LQQK, VVKR…KQRP, and RESN…QIHQ. Residues 559-588 show a composition bias toward polar residues; that stretch reads TFQTGGAPSSSEQPKPVVVTTSGPKVTPLQ. Positions 587–630 form a coiled coil; that stretch reads LQQKKADTLERLKETLRKKQEMLEQKRNEYRKKLATLEKQGTVV. Positions 630–647 are enriched in basic and acidic residues; it reads VKREEADEPDAKRVKLDT. Ser657 is modified (phosphoserine). Positions 677–688 are enriched in polar residues; the sequence is AKLSTETPSPDS. Positions 807–828 are enriched in low complexity; sequence RESNNNNNNSNSLSVSRDNLSS. Positions 846–863 are enriched in polar residues; sequence KTSSTEEPENTNVSGDND. A compositionally biased stretch (basic and acidic residues) spans 865 to 886; sequence TLDKQETKESDNDNNKSNHESI. A compositionally biased stretch (acidic residues) spans 898-908; that stretch reads TDEEQSEQIHQ.

The polypeptide is Zinc finger CCCH domain-containing protein 41 (Arabidopsis thaliana (Mouse-ear cress)).